Consider the following 434-residue polypeptide: ATP-dependent RNA helicase SUB2 (434 aa).

The span at 1–16 shows a compositional bias: acidic residues; the sequence is MSGEEDLIDYSDDELN. The interval 1 to 32 is disordered; it reads MSGEEDLIDYSDDELNNETTAPASNGKKGDAA. The Q motif motif lies at 50 to 78; the sequence is TGFRDFLLKPELLRAIADCGFEHPSEVQQ. The Helicase ATP-binding domain occupies 81–256; the sequence is IPQAMLGGDI…RKFMQNPTEH (176 aa). 94–101 contributes to the ATP binding site; sequence AKSGLGKT. Positions 203-206 match the DEAD box motif; that stretch reads DECD. A Helicase C-terminal domain is found at 268-429; it reads GLQQYYIPLE…EFPKEGIDAS (162 aa).

This sequence belongs to the DEAD box helicase family. DECD subfamily.

Its subcellular location is the nucleus. It catalyses the reaction ATP + H2O = ADP + phosphate + H(+). In terms of biological role, ATP-binding RNA helicase involved in transcription elongation and required for the export of mRNA out of the nucleus. SUB2 also plays a role in pre-mRNA splicing and spliceosome assembly. May be involved in rDNA and telomeric silencing, and maintenance of genome integrity. The chain is ATP-dependent RNA helicase SUB2 (SUB2) from Chaetomium globosum (strain ATCC 6205 / CBS 148.51 / DSM 1962 / NBRC 6347 / NRRL 1970) (Soil fungus).